A 421-amino-acid chain; its full sequence is Trimethyllysine dioxygenase, mitochondrial (421 aa).

The N-terminal 15 residues, 1 to 15 (MWCHRLSHLQSRLQD), are a transit peptide targeting the mitochondrion. Lys-236 carries the N6-acetyllysine modification. Positions 242, 244, and 389 each coordinate Fe cation.

Belongs to the gamma-BBH/TMLD family. In terms of assembly, homodimer. Fe(2+) serves as cofactor. L-ascorbate is required as a cofactor.

Its subcellular location is the mitochondrion matrix. It carries out the reaction N(6),N(6),N(6)-trimethyl-L-lysine + 2-oxoglutarate + O2 = (3S)-3-hydroxy-N(6),N(6),N(6)-trimethyl-L-lysine + succinate + CO2. The protein operates within amine and polyamine biosynthesis; carnitine biosynthesis. Functionally, converts trimethyllysine (TML) into hydroxytrimethyllysine (HTML). The sequence is that of Trimethyllysine dioxygenase, mitochondrial (TMLHE) from Bos taurus (Bovine).